Reading from the N-terminus, the 187-residue chain is ATP synthase subunit delta (187 aa).

The protein belongs to the ATPase delta chain family. F-type ATPases have 2 components, F(1) - the catalytic core - and F(0) - the membrane proton channel. F(1) has five subunits: alpha(3), beta(3), gamma(1), delta(1), epsilon(1). F(0) has three main subunits: a(1), b(2) and c(10-14). The alpha and beta chains form an alternating ring which encloses part of the gamma chain. F(1) is attached to F(0) by a central stalk formed by the gamma and epsilon chains, while a peripheral stalk is formed by the delta and b chains.

It localises to the cell inner membrane. In terms of biological role, f(1)F(0) ATP synthase produces ATP from ADP in the presence of a proton or sodium gradient. F-type ATPases consist of two structural domains, F(1) containing the extramembraneous catalytic core and F(0) containing the membrane proton channel, linked together by a central stalk and a peripheral stalk. During catalysis, ATP synthesis in the catalytic domain of F(1) is coupled via a rotary mechanism of the central stalk subunits to proton translocation. This protein is part of the stalk that links CF(0) to CF(1). It either transmits conformational changes from CF(0) to CF(1) or is implicated in proton conduction. The chain is ATP synthase subunit delta from Leptospira biflexa serovar Patoc (strain Patoc 1 / Ames).